Here is a 528-residue protein sequence, read N- to C-terminus: Phenylalanine--tRNA ligase alpha subunit (528 aa).

T365 and F444 together coordinate L-phenylalanine. E446 contributes to the Mg(2+) binding site. F469 is a binding site for L-phenylalanine.

This sequence belongs to the class-II aminoacyl-tRNA synthetase family. Phe-tRNA synthetase alpha subunit type 2 subfamily. Tetramer of two alpha and two beta subunits. Requires Mg(2+) as cofactor.

The protein resides in the cytoplasm. The enzyme catalyses tRNA(Phe) + L-phenylalanine + ATP = L-phenylalanyl-tRNA(Phe) + AMP + diphosphate + H(+). The polypeptide is Phenylalanine--tRNA ligase alpha subunit (Borreliella burgdorferi (strain ATCC 35210 / DSM 4680 / CIP 102532 / B31) (Borrelia burgdorferi)).